Here is a 591-residue protein sequence, read N- to C-terminus: Glutathione hydrolase (591 aa).

The signal sequence occupies residues 1–41; sequence MASKWIEEQPLVHRRDIRISSKSRIAAGLLVLLVLWRYGLP. R122 provides a ligand contact to L-glutamate. 3 N-linked (GlcNAc...) asparagine glycosylation sites follow: N135, N270, and N389. Residue T393 is the Nucleophile of the active site. L-glutamate-binding positions include T411, E432, and 464–465; that span reads SA. A glycan (N-linked (GlcNAc...) asparagine) is linked at N534.

This sequence belongs to the gamma-glutamyltransferase family.

The enzyme catalyses an N-terminal (5-L-glutamyl)-[peptide] + an alpha-amino acid = 5-L-glutamyl amino acid + an N-terminal L-alpha-aminoacyl-[peptide]. It carries out the reaction glutathione + H2O = L-cysteinylglycine + L-glutamate. It catalyses the reaction an S-substituted glutathione + H2O = an S-substituted L-cysteinylglycine + L-glutamate. It participates in mycotoxin biosynthesis. Gamma-glutamyltransferase; part of the gene cluster that mediates the biosynthesis of the secondary metabolite ustiloxin B, an antimitotic tetrapeptide. First, ustA is processed by the subtilisin-like endoprotease Kex2 that is outside the ustiloxin B gene cluster, at the C-terminal side of Arg-Lys, after transfer to Golgi apparatus through the endoplasmic reticulum (ER). Cleavage by KEX2 generates 16 peptides YAIG-I to YAIG-XVI. To process the precursor peptide further, at least two peptidases are necessary to cleave the N-terminal and C-terminal sides of the Tyr-Ala-Ile-Gly core peptide which serves as backbone for the synthesis of ustiloxin B, through cyclization and modification of the tyrosine with a non-protein coding amino acid, norvaline. One of the two peptidases must be the serine peptidase ustP; and the other pepdidase is probably ustH. Macrocyclization of the core peptide derived from ustA requires the tyrosinase ustQ, as well as the homologous oxidases ustYa and ustYb, and leads to the production of the first cyclization product N-desmethylustiloxin F. For the formation of N-desmethylustiloxin F, three oxidation steps are required, hydroxylation at the benzylic position, hydroxylation at either the aromatic ring of Tyr or beta-position of Ile, and oxidative cyclization. UstQ may catalyze the oxidation of a phenol moiety, whereas the ustYa and ustYb are most likely responsible for the remaining two-step oxidations. N-desmethylustiloxin F is then methylated by ustM to yield ustiloxin F which in turn substrate of the cytochrome P450 monooxygenase ustC which catalyzes the formation of S-deoxyustiloxin H. The flavoprotein monooxygenases ustF1 and ustF2 then participate in the modification of the side chain of S-deoxyustiloxin H, leading to the synthesis of an oxime intermediate, via ustiloxin H. Finally, carboxylative dehydration performed by the cysteine desulfurase-like protein ustD yields ustiloxin B. In Aspergillus flavus (strain ATCC 200026 / FGSC A1120 / IAM 13836 / NRRL 3357 / JCM 12722 / SRRC 167), this protein is Glutathione hydrolase.